A 133-amino-acid chain; its full sequence is Small ribosomal subunit protein uS8 (133 aa).

The protein belongs to the universal ribosomal protein uS8 family. As to quaternary structure, part of the 30S ribosomal subunit. Contacts proteins S5 and S12.

Functionally, one of the primary rRNA binding proteins, it binds directly to 16S rRNA central domain where it helps coordinate assembly of the platform of the 30S subunit. The protein is Small ribosomal subunit protein uS8 of Syntrophus aciditrophicus (strain SB).